A 180-amino-acid chain; its full sequence is Large ribosomal subunit protein uL22 (180 aa).

The tract at residues 111 to 180 (VVVESRPAKD…ETSDAKGGSD (70 aa)) is disordered. The span at 142–166 (PAKKAPAKKAPAKKAPAKTAAKKTP) shows a compositional bias: basic residues. A compositionally biased stretch (basic and acidic residues) spans 171–180 (ETSDAKGGSD).

The protein belongs to the universal ribosomal protein uL22 family. As to quaternary structure, part of the 50S ribosomal subunit.

Its function is as follows. This protein binds specifically to 23S rRNA; its binding is stimulated by other ribosomal proteins, e.g. L4, L17, and L20. It is important during the early stages of 50S assembly. It makes multiple contacts with different domains of the 23S rRNA in the assembled 50S subunit and ribosome. In terms of biological role, the globular domain of the protein is located near the polypeptide exit tunnel on the outside of the subunit, while an extended beta-hairpin is found that lines the wall of the exit tunnel in the center of the 70S ribosome. This is Large ribosomal subunit protein uL22 from Mycobacterium avium (strain 104).